A 358-amino-acid chain; its full sequence is uncharacterized protein (358 aa).

It belongs to the methyltransferase superfamily.

This is an uncharacterized protein from Mycobacterium tuberculosis (strain CDC 1551 / Oshkosh).